Reading from the N-terminus, the 64-residue chain is Large ribosomal subunit protein eL37 (64 aa).

The C4-type zinc finger occupies 1 to 6 (GRCSAC). 2 residues coordinate Zn(2+): Cys3 and Cys6.

This sequence belongs to the eukaryotic ribosomal protein eL37 family. Zn(2+) is required as a cofactor.

Binds to the 23S rRNA. The protein is Large ribosomal subunit protein eL37 (RPL37) of Solanum lycopersicum (Tomato).